The sequence spans 445 residues: Rab GDP dissociation inhibitor beta (445 aa).

N-acetylmethionine is present on Met-1. Lys-57 is modified (N6-succinyllysine). Lys-112 bears the N6-acetyllysine mark. Ser-130 is subject to Phosphoserine. Lys-269 carries the N6-acetyllysine modification. At Ser-382 the chain carries Phosphoserine.

This sequence belongs to the Rab GDI family. Interacts with RHOH. Interacts with the GDP-bound inactive forms of RAB3A, RAB3B, RAB3C, RAB5A, RAB5B, RAB5C, RAB8A, RAB8B, RAB10, RAB12, RAB35, and RAB43; binds RAB3D to a lesser extent. Interacts with DZIP1; this interaction negatively regulates the interaction of GDI2 with GDP-bound RAB8A.

The protein resides in the cytoplasm. Its subcellular location is the membrane. It localises to the golgi apparatus. The protein localises to the trans-Golgi network. Functionally, GDP-dissociation inhibitor preventing the GDP to GTP exchange of most Rab proteins. By keeping these small GTPases in their inactive GDP-bound form regulates intracellular membrane trafficking. Negatively regulates protein transport to the cilium and ciliogenesis through the inhibition of RAB8A. The polypeptide is Rab GDP dissociation inhibitor beta (GDI2) (Pongo abelii (Sumatran orangutan)).